We begin with the raw amino-acid sequence, 351 residues long: Anthranilate phosphoribosyltransferase (351 aa).

5-phospho-alpha-D-ribose 1-diphosphate-binding positions include Gly-90, 93-94, Thr-98, 100-103, 118-126, and Ser-130; these read GD, NIST, and KHGNRSASG. Gly-90 is an anthranilate binding site. Ser-102 serves as a coordination point for Mg(2+). Asn-121 serves as a coordination point for anthranilate. Arg-176 serves as a coordination point for anthranilate. Mg(2+)-binding residues include Asp-235 and Glu-236.

Belongs to the anthranilate phosphoribosyltransferase family. Homodimer. It depends on Mg(2+) as a cofactor.

It catalyses the reaction N-(5-phospho-beta-D-ribosyl)anthranilate + diphosphate = 5-phospho-alpha-D-ribose 1-diphosphate + anthranilate. The protein operates within amino-acid biosynthesis; L-tryptophan biosynthesis; L-tryptophan from chorismate: step 2/5. Its function is as follows. Catalyzes the transfer of the phosphoribosyl group of 5-phosphorylribose-1-pyrophosphate (PRPP) to anthranilate to yield N-(5'-phosphoribosyl)-anthranilate (PRA). This chain is Anthranilate phosphoribosyltransferase, found in Prochlorococcus marinus (strain MIT 9313).